Here is a 260-residue protein sequence, read N- to C-terminus: DNA-binding protein RFXANK (260 aa).

Residues 1–79 (MELTQPAEDL…STTLTNRQRG (79 aa)) form a disordered region. Acidic residues predominate over residues 22–33 (GDPEDPGEEAAD). Polar residues predominate over residues 57–77 (SVSSPQAGSSLKHSTTLTNRQ). 5 ANK repeats span residues 89-118 (LDSL…NLVN), 123-152 (RGFT…DPHI), 156-185 (ERES…DINI), 189-218 (NGGT…DLTT), and 222-251 (SGYT…KLFQ).

Forms homodimers. The RFX heterotetrameric complex consists of 2 molecules of RFX5 and one each of RFXAP and RFX-B/RFXANK; with each subunit representing a separate complementation group. Interacts (via ankyrin repeats) with RFX5 (via PxLPxI/L motif); the interaction is direct. RFX forms cooperative DNA binding complexes with X2BP and CBF/NF-Y. RFX associates with CIITA to form an active transcriptional complex. Interacts with RAF1. Interacts (via ankyrin repeats) with RFX7 (via PxLPxI/L motif). In terms of processing, phosphorylated by RAF1. As to expression, ubiquitous.

It is found in the cytoplasm. The protein localises to the nucleus. Activates transcription from class II MHC promoters. Activation requires the activity of the MHC class II transactivator/CIITA. May regulate other genes in the cell. RFX binds the X1 box of MHC-II promoters. May also potentiate the activation of RAF1. Functionally, isoform 2 is not involved in the positive regulation of MHC class II genes. The protein is DNA-binding protein RFXANK (RFXANK) of Homo sapiens (Human).